We begin with the raw amino-acid sequence, 549 residues long: Glucose-6-phosphate isomerase (549 aa).

The active-site Proton donor is Glu355. Residues His386 and Lys514 contribute to the active site.

This sequence belongs to the GPI family.

The protein localises to the cytoplasm. The catalysed reaction is alpha-D-glucose 6-phosphate = beta-D-fructose 6-phosphate. The protein operates within carbohydrate biosynthesis; gluconeogenesis. It functions in the pathway carbohydrate degradation; glycolysis; D-glyceraldehyde 3-phosphate and glycerone phosphate from D-glucose: step 2/4. Functionally, catalyzes the reversible isomerization of glucose-6-phosphate to fructose-6-phosphate. This is Glucose-6-phosphate isomerase from Salmonella paratyphi C (strain RKS4594).